We begin with the raw amino-acid sequence, 109 residues long: Large ribosomal subunit protein uL22 (109 aa).

This sequence belongs to the universal ribosomal protein uL22 family. In terms of assembly, part of the 50S ribosomal subunit.

This protein binds specifically to 23S rRNA; its binding is stimulated by other ribosomal proteins, e.g. L4, L17, and L20. It is important during the early stages of 50S assembly. It makes multiple contacts with different domains of the 23S rRNA in the assembled 50S subunit and ribosome. Functionally, the globular domain of the protein is located near the polypeptide exit tunnel on the outside of the subunit, while an extended beta-hairpin is found that lines the wall of the exit tunnel in the center of the 70S ribosome. In Dehalococcoides mccartyi (strain ATCC BAA-2100 / JCM 16839 / KCTC 5957 / BAV1), this protein is Large ribosomal subunit protein uL22.